Reading from the N-terminus, the 1366-residue chain is ABC multidrug transporter MDR2 (1366 aa).

A helical membrane pass occupies residues 52–72; sequence IALIVIGTIAGIGAGIPFPLL. In terms of domain architecture, ABC transmembrane type-1 1 spans 56–354; it reads VIGTIAGIGA…MAPFMHIFAS (299 aa). Residue Asn84 is glycosylated (N-linked (GlcNAc...) asparagine). The next 5 helical transmembrane spans lie at 106 to 126, 180 to 200, 202 to 222, 288 to 308, and 323 to 343; these read VLQV…HTGC, KVGL…VAFL, VATI…MAFG, IQFG…FWQG, and VSVG…FVLS. An ABC transporter 1 domain is found at 390-669; that stretch reads IELQDVTFNY…DGVYAGMVRL (280 aa). 425–432 lines the ATP pocket; that stretch reads GTSGSGKS. Asn620 carries an N-linked (GlcNAc...) asparagine glycan. The segment at 727–746 is disordered; that stretch reads PEEADSLPTEPEAKKEKPKQ. The next 4 helical transmembrane spans lie at 768–788, 807–827, 868–888, and 898–918; these read LGLI…VIFG, GMLF…AVIV, LLVA…GTTI, and LFAG…VLLA. The region spanning 768 to 1055 is the ABC transmembrane type-1 2 domain; sequence LGLITSIMIG…MFALVPDISK (288 aa). Asn976 carries N-linked (GlcNAc...) asparagine glycosylation. The next 2 membrane-spanning stretches (helical) occupy residues 995–1015 and 1019–1039; these read FWLS…YWWG and ILAG…LLFS. Residues 1122-1361 enclose the ABC transporter 2 domain; the sequence is VQFRNVHFRY…CESYRANVIH (240 aa). 1157 to 1164 provides a ligand contact to ATP; that stretch reads GPSGSGKS.

This sequence belongs to the ABC transporter superfamily. ABCB family. Multidrug resistance exporter (TC 3.A.1.201) subfamily.

The protein resides in the cell membrane. Its function is as follows. Pleiotropic ABC efflux transporter that may be involved in the modulation susceptibility to a wide range of unrelated cytotoxic compounds. Does not act as an efflux pump for azoles, including fluconazole, itraconazole, ketoconazole, miconazole and voriconazole, nor does it modulate susceptibility to cycloheximide. This chain is ABC multidrug transporter MDR2, found in Trichophyton rubrum (strain ATCC MYA-4607 / CBS 118892) (Athlete's foot fungus).